Here is a 177-residue protein sequence, read N- to C-terminus: Large ribosomal subunit protein uL6 (177 aa).

The protein belongs to the universal ribosomal protein uL6 family. As to quaternary structure, part of the 50S ribosomal subunit.

Functionally, this protein binds to the 23S rRNA, and is important in its secondary structure. It is located near the subunit interface in the base of the L7/L12 stalk, and near the tRNA binding site of the peptidyltransferase center. The chain is Large ribosomal subunit protein uL6 from Serratia proteamaculans (strain 568).